The following is a 316-amino-acid chain: UDP-N-acetylenolpyruvoylglucosamine reductase (316 aa).

Positions 30–194 (VGGEADYLVF…LSVKFALAPG (165 aa)) constitute an FAD-binding PCMH-type domain. The active site involves arginine 173. Serine 223 (proton donor) is an active-site residue. Residue glutamate 293 is part of the active site.

This sequence belongs to the MurB family. It depends on FAD as a cofactor.

It localises to the cytoplasm. It catalyses the reaction UDP-N-acetyl-alpha-D-muramate + NADP(+) = UDP-N-acetyl-3-O-(1-carboxyvinyl)-alpha-D-glucosamine + NADPH + H(+). It functions in the pathway cell wall biogenesis; peptidoglycan biosynthesis. In terms of biological role, cell wall formation. The sequence is that of UDP-N-acetylenolpyruvoylglucosamine reductase from Streptococcus pneumoniae serotype 2 (strain D39 / NCTC 7466).